The chain runs to 228 residues: UPF0758 protein CLI_3057 (228 aa).

Residues 106–228 (KINTPLDVSN…YVSMKEKGTI (123 aa)) enclose the MPN domain. His-177, His-179, and Asp-190 together coordinate Zn(2+). The JAMM motif motif lies at 177-190 (HNHPSGDPTPSKED).

This sequence belongs to the UPF0758 family.

This is UPF0758 protein CLI_3057 from Clostridium botulinum (strain Langeland / NCTC 10281 / Type F).